The chain runs to 502 residues: Bone morphogenetic protein receptor type-1B (502 aa).

Residues 1–10 (MPLLSSSKLS) show a composition bias toward polar residues. An N-terminal signal peptide occupies residues 1–13 (MPLLSSSKLSMES). The disordered stretch occupies residues 1–27 (MPLLSSSKLSMESRKEDSEGTAPAPPQ). The Extracellular segment spans residues 14–126 (RKEDSEGTAP…DFAEGNIHHK (113 aa)). Intrachain disulfides connect Cys32–Cys53, Cys34–Cys38, Cys47–Cys71, Cys81–Cys95, and Cys96–Cys102. Asn44 carries N-linked (GlcNAc...) asparagine glycosylation. Residues 127–148 (ALLISVTVCSILLVLIIIFCYF) form a helical membrane-spanning segment. Residues 149–502 (RYKRQEARPR…KMSESQDIKL (354 aa)) lie on the Cytoplasmic side of the membrane. One can recognise a GS domain in the interval 174–203 (ESLKDLIEQSQSSGSGSGLPLLVQRTIAKQ). Positions 204–494 (IQMVKQIGKG…LRVKKTLAKM (291 aa)) constitute a Protein kinase domain. ATP contacts are provided by residues 210–218 (IGKGRYGEV) and Lys231. The active-site Proton acceptor is Asp332.

It belongs to the protein kinase superfamily. TKL Ser/Thr protein kinase family. TGFB receptor subfamily. The cofactor is Mg(2+). Requires Mn(2+) as cofactor. Autophosphorylated.

Its subcellular location is the cell membrane. It catalyses the reaction L-threonyl-[receptor-protein] + ATP = O-phospho-L-threonyl-[receptor-protein] + ADP + H(+). The catalysed reaction is L-seryl-[receptor-protein] + ATP = O-phospho-L-seryl-[receptor-protein] + ADP + H(+). Its function is as follows. On ligand binding, forms a receptor complex consisting of two type II and two type I transmembrane serine/threonine kinases. Type II receptors phosphorylate and activate type I receptors which autophosphorylate, then bind and activate SMAD transcription. Positively regulates chondrocyte differentiation. In Gallus gallus (Chicken), this protein is Bone morphogenetic protein receptor type-1B (BMPR1B).